A 260-amino-acid polypeptide reads, in one-letter code: Indole-3-glycerol phosphate synthase (260 aa).

It belongs to the TrpC family.

It catalyses the reaction 1-(2-carboxyphenylamino)-1-deoxy-D-ribulose 5-phosphate + H(+) = (1S,2R)-1-C-(indol-3-yl)glycerol 3-phosphate + CO2 + H2O. Its pathway is amino-acid biosynthesis; L-tryptophan biosynthesis; L-tryptophan from chorismate: step 4/5. This is Indole-3-glycerol phosphate synthase from Staphylococcus aureus (strain bovine RF122 / ET3-1).